Consider the following 1127-residue polypeptide: Carbamoyl phosphate synthase large chain (1127 aa).

The segment at 1–402 (MPKRTDIKSV…SLGKAMRSID (402 aa)) is carboxyphosphate synthetic domain. Positions 129, 169, 175, 176, 208, 210, 215, 241, 242, 243, 285, and 299 each coordinate ATP. Positions 133–328 (KKVVDEAGAE…IAKIATKLAL (196 aa)) constitute an ATP-grasp 1 domain. The Mg(2+) site is built by Gln285, Glu299, and Asn301. Residues Gln285, Glu299, and Asn301 each contribute to the Mn(2+) site. The tract at residues 403 to 551 (KRHMGFNWDG…YYYSCYADET (149 aa)) is oligomerization domain. The interval 552–962 (ELRPREREAV…AFAKSQLAAY (411 aa)) is carbamoyl phosphate synthetic domain. The ATP-grasp 2 domain occupies 681-881 (GEVLKKAEMN…LAKAAARIMA (201 aa)). Residues Arg717, Lys765, Leu767, Glu772, Gly797, Val798, His799, Ser800, Gln840, and Glu852 each contribute to the ATP site. Positions 840, 852, and 854 each coordinate Mg(2+). Mn(2+) contacts are provided by Gln840, Glu852, and Asn854. The tract at residues 963-1127 (DGGLPTHGNV…QLFELERREF (165 aa)) is allosteric domain. Residues 964–1127 (GGLPTHGNVF…QLFELERREF (164 aa)) enclose the MGS-like domain.

The protein belongs to the CarB family. As to quaternary structure, composed of two chains; the small (or glutamine) chain promotes the hydrolysis of glutamine to ammonia, which is used by the large (or ammonia) chain to synthesize carbamoyl phosphate. Tetramer of heterodimers (alpha,beta)4. Mg(2+) is required as a cofactor. Mn(2+) serves as cofactor.

The enzyme catalyses hydrogencarbonate + L-glutamine + 2 ATP + H2O = carbamoyl phosphate + L-glutamate + 2 ADP + phosphate + 2 H(+). It carries out the reaction hydrogencarbonate + NH4(+) + 2 ATP = carbamoyl phosphate + 2 ADP + phosphate + 2 H(+). The protein operates within amino-acid biosynthesis; L-arginine biosynthesis; carbamoyl phosphate from bicarbonate: step 1/1. It functions in the pathway pyrimidine metabolism; UMP biosynthesis via de novo pathway; (S)-dihydroorotate from bicarbonate: step 1/3. In terms of biological role, large subunit of the glutamine-dependent carbamoyl phosphate synthetase (CPSase). CPSase catalyzes the formation of carbamoyl phosphate from the ammonia moiety of glutamine, carbonate, and phosphate donated by ATP, constituting the first step of 2 biosynthetic pathways, one leading to arginine and/or urea and the other to pyrimidine nucleotides. The large subunit (synthetase) binds the substrates ammonia (free or transferred from glutamine from the small subunit), hydrogencarbonate and ATP and carries out an ATP-coupled ligase reaction, activating hydrogencarbonate by forming carboxy phosphate which reacts with ammonia to form carbamoyl phosphate. This is Carbamoyl phosphate synthase large chain from Bifidobacterium longum (strain DJO10A).